A 191-amino-acid polypeptide reads, in one-letter code: UPF0301 protein Bphy_2327 (191 aa).

Belongs to the UPF0301 (AlgH) family.

The chain is UPF0301 protein Bphy_2327 from Paraburkholderia phymatum (strain DSM 17167 / CIP 108236 / LMG 21445 / STM815) (Burkholderia phymatum).